The primary structure comprises 463 residues: ATP synthase subunit beta (463 aa).

152 to 159 lines the ATP pocket; that stretch reads GGAGVGKT.

Belongs to the ATPase alpha/beta chains family. F-type ATPases have 2 components, CF(1) - the catalytic core - and CF(0) - the membrane proton channel. CF(1) has five subunits: alpha(3), beta(3), gamma(1), delta(1), epsilon(1). CF(0) has three main subunits: a(1), b(2) and c(9-12). The alpha and beta chains form an alternating ring which encloses part of the gamma chain. CF(1) is attached to CF(0) by a central stalk formed by the gamma and epsilon chains, while a peripheral stalk is formed by the delta and b chains.

The protein resides in the cell membrane. The catalysed reaction is ATP + H2O + 4 H(+)(in) = ADP + phosphate + 5 H(+)(out). Its function is as follows. Produces ATP from ADP in the presence of a proton gradient across the membrane. The catalytic sites are hosted primarily by the beta subunits. The protein is ATP synthase subunit beta of Clostridium botulinum (strain Eklund 17B / Type B).